We begin with the raw amino-acid sequence, 125 residues long: MSSSPAQRHTRKTQIGFVSSRSGDKSIKVTVPYKSPHPLYHKIVNRQTVLHVHDEKNEAKLGDTVEVMETRPMSRLKRWRIVSIVQRAVTTDAVAISETDVAAQVPTKTTASNTPAPAEQPAPQA.

Disordered regions lie at residues 1 to 21 (MSSS…VSSR) and 101 to 125 (VAAQ…APQA).

The protein belongs to the universal ribosomal protein uS17 family. Part of the 30S ribosomal subunit.

Functionally, one of the primary rRNA binding proteins, it binds specifically to the 5'-end of 16S ribosomal RNA. In Opitutus terrae (strain DSM 11246 / JCM 15787 / PB90-1), this protein is Small ribosomal subunit protein uS17.